A 116-amino-acid polypeptide reads, in one-letter code: Venom protein 54.1 (116 aa).

An N-terminal signal peptide occupies residues 1 to 19; sequence MNFQVFSLIFFNFVYYCSC.

In terms of processing, contains 3 disulfide bonds. In terms of tissue distribution, expressed by the venom gland.

Its subcellular location is the secreted. The sequence is that of Venom protein 54.1 from Lychas mucronatus (Chinese swimming scorpion).